A 91-amino-acid chain; its full sequence is Small integral membrane protein 13 (91 aa).

The chain crosses the membrane as a helical span at residues 10-30; it reads LVFVATLLIVLLLMVCGWYFV. The interval 47 to 91 is disordered; the sequence is DTGSQEGDHEPSGSETEEDTSSSPHRIRSARQRRAPADEGHRPLT. Residues S58 and S60 each carry the phosphoserine modification. T62 bears the Phosphothreonine mark. A Phosphoserine modification is found at S69. A compositionally biased stretch (basic residues) spans 71–80; the sequence is HRIRSARQRR. Residues 81–91 are compositionally biased toward basic and acidic residues; the sequence is APADEGHRPLT.

This sequence belongs to the SMIM13 family.

It is found in the membrane. This chain is Small integral membrane protein 13 (SMIM13), found in Homo sapiens (Human).